The chain runs to 329 residues: DNA-directed RNA polymerase subunit alpha (329 aa).

An alpha N-terminal domain (alpha-NTD) region spans residues 1-234 (MQGSVTEFLR…EQLDAFVELR (234 aa)). Positions 248–329 (FDPILLRPVD…WPPASLVDDL (82 aa)) are alpha C-terminal domain (alpha-CTD).

The protein belongs to the RNA polymerase alpha chain family. As to quaternary structure, homodimer. The RNAP catalytic core consists of 2 alpha, 1 beta, 1 beta' and 1 omega subunit. When a sigma factor is associated with the core the holoenzyme is formed, which can initiate transcription.

It carries out the reaction RNA(n) + a ribonucleoside 5'-triphosphate = RNA(n+1) + diphosphate. Functionally, DNA-dependent RNA polymerase catalyzes the transcription of DNA into RNA using the four ribonucleoside triphosphates as substrates. The protein is DNA-directed RNA polymerase subunit alpha of Shewanella violacea (strain JCM 10179 / CIP 106290 / LMG 19151 / DSS12).